The primary structure comprises 542 residues: GMP synthase [glutamine-hydrolyzing] (542 aa).

Positions 28–218 (IIVILDFGSQ…VYHICHCEPT (191 aa)) constitute a Glutamine amidotransferase type-1 domain. Cysteine 105 acts as the Nucleophile in catalysis. Active-site residues include histidine 192 and glutamate 194. One can recognise a GMPS ATP-PPase domain in the interval 219 to 417 (WTTAAFIEES…IGLPEEIVRR (199 aa)). 246–252 (SGGVDSS) contacts ATP.

As to quaternary structure, homodimer.

It catalyses the reaction XMP + L-glutamine + ATP + H2O = GMP + L-glutamate + AMP + diphosphate + 2 H(+). It participates in purine metabolism; GMP biosynthesis; GMP from XMP (L-Gln route): step 1/1. In terms of biological role, catalyzes the synthesis of GMP from XMP. This is GMP synthase [glutamine-hydrolyzing] (guaA) from Synechocystis sp. (strain ATCC 27184 / PCC 6803 / Kazusa).